Consider the following 293-residue polypeptide: Probable metal transport system membrane protein CPn_0543/CP_0209/CPj0543/CpB0565 (293 aa).

A run of 7 helical transmembrane segments spans residues 12–32, 41–61, 68–88, 101–121, 140–160, 183–203, and 253–273; these read LLIL…GGVM, IVSI…LTLW, LSFF…LCIG, LIAM…SRLP, PSDL…VVLC, LWYF…IYVM, and FPVG…SLCV.

The protein belongs to the ABC-3 integral membrane protein family.

Its subcellular location is the cell inner membrane. Functionally, part of an ATP-driven transport system CPn_0541/CPn_0542/CPn_0543 for a metal. This is Probable metal transport system membrane protein CPn_0543/CP_0209/CPj0543/CpB0565 from Chlamydia pneumoniae (Chlamydophila pneumoniae).